A 398-amino-acid polypeptide reads, in one-letter code: tRNA-specific 2-thiouridylase MnmA (398 aa).

ATP-binding positions include 20 to 27 (AMSGGVDS) and Leu46. The Nucleophile role is filled by Cys114. A disulfide bridge connects residues Cys114 and Cys210. Residue Gly138 participates in ATP binding. The interaction with tRNA stretch occupies residues 160-162 (RDQ). Catalysis depends on Cys210, which acts as the Cysteine persulfide intermediate.

It belongs to the MnmA/TRMU family.

Its subcellular location is the cytoplasm. The enzyme catalyses S-sulfanyl-L-cysteinyl-[protein] + uridine(34) in tRNA + AH2 + ATP = 2-thiouridine(34) in tRNA + L-cysteinyl-[protein] + A + AMP + diphosphate + H(+). Its function is as follows. Catalyzes the 2-thiolation of uridine at the wobble position (U34) of tRNA, leading to the formation of s(2)U34. The sequence is that of tRNA-specific 2-thiouridylase MnmA from Brucella suis (strain ATCC 23445 / NCTC 10510).